A 383-amino-acid polypeptide reads, in one-letter code: Glutaminyl-peptide cyclotransferase-like protein (383 aa).

A disordered region spans residues 1–25; sequence MPSGGRGRPRLQVGERSLLERPSPP. A helical transmembrane segment spans residues 35–57; it reads LLPQLLLALTVASVFYTIWRIWH. Cysteines 168 and 192 form a disulfide. Aspartate 187 is a binding site for Zn(2+). Residue glutamate 226 is the Proton acceptor of the active site. Glutamate 227 is a binding site for Zn(2+). Aspartate 270 acts as the Proton acceptor in catalysis. Residue histidine 352 coordinates Zn(2+).

This sequence belongs to the glutaminyl-peptide cyclotransferase family.

Its subcellular location is the golgi apparatus membrane. It catalyses the reaction N-terminal L-glutaminyl-[peptide] = N-terminal 5-oxo-L-prolyl-[peptide] + NH4(+). Its function is as follows. Responsible for the biosynthesis of pyroglutamyl peptides. The polypeptide is Glutaminyl-peptide cyclotransferase-like protein (QPCTL) (Bos taurus (Bovine)).